We begin with the raw amino-acid sequence, 498 residues long: 3-octaprenyl-4-hydroxybenzoate carboxy-lyase (498 aa).

Asn-176 provides a ligand contact to Mn(2+). Prenylated FMN-binding positions include 179-181, 193-195, and 198-199; these read IYR, RWL, and RG. Glu-242 lines the Mn(2+) pocket. Asp-291 acts as the Proton donor in catalysis.

Belongs to the UbiD family. Homohexamer. Prenylated FMN is required as a cofactor. Mn(2+) serves as cofactor.

It localises to the cell membrane. The catalysed reaction is a 4-hydroxy-3-(all-trans-polyprenyl)benzoate + H(+) = a 2-(all-trans-polyprenyl)phenol + CO2. It functions in the pathway cofactor biosynthesis; ubiquinone biosynthesis. Catalyzes the decarboxylation of 3-octaprenyl-4-hydroxy benzoate to 2-octaprenylphenol, an intermediate step in ubiquinone biosynthesis. The polypeptide is 3-octaprenyl-4-hydroxybenzoate carboxy-lyase (Escherichia coli O6:K15:H31 (strain 536 / UPEC)).